A 388-amino-acid polypeptide reads, in one-letter code: 1-deoxy-D-xylulose 5-phosphate reductoisomerase (388 aa).

Residues T13, G14, S15, I16, R40, N41, and N124 each coordinate NADPH. K125 contacts 1-deoxy-D-xylulose 5-phosphate. An NADPH-binding site is contributed by E126. D150 lines the Mn(2+) pocket. 1-deoxy-D-xylulose 5-phosphate contacts are provided by S151, E152, S176, and H199. Mn(2+) is bound at residue E152. An NADPH-binding site is contributed by G205. 1-deoxy-D-xylulose 5-phosphate is bound by residues S212, N217, K218, and E221. E221 serves as a coordination point for Mn(2+).

This sequence belongs to the DXR family. Homodimer. It depends on Mg(2+) as a cofactor. Mn(2+) serves as cofactor. The cofactor is Co(2+).

It carries out the reaction 2-C-methyl-D-erythritol 4-phosphate + NADP(+) = 1-deoxy-D-xylulose 5-phosphate + NADPH + H(+). The protein operates within isoprenoid biosynthesis; isopentenyl diphosphate biosynthesis via DXP pathway; isopentenyl diphosphate from 1-deoxy-D-xylulose 5-phosphate: step 1/6. With respect to regulation, competitively inhibited by the antibiotic fosmidomycin. Its function is as follows. Catalyzes the NADPH-dependent rearrangement and reduction of 1-deoxy-D-xylulose-5-phosphate (DXP) to 2-C-methyl-D-erythritol 4-phosphate (MEP). Cannot use NADH instead of NADPH as the reducing agent. This chain is 1-deoxy-D-xylulose 5-phosphate reductoisomerase, found in Zymomonas mobilis subsp. mobilis (strain ATCC 31821 / ZM4 / CP4).